The sequence spans 255 residues: Envelope glycoprotein E (255 aa).

The Virion surface segment spans residues glycine 1–tyrosine 110. The chain crosses the membrane as a helical span at residues leucine 111 to tryptophan 131. The Intravirion portion of the chain corresponds to glycine 132–lysine 255. Positions tyrosine 154–valine 157 match the Internalization motif motif. The acidic stretch occupies residues alanine 173–glutamate 187. Acidic residues predominate over residues serine 176–glutamate 189. 2 disordered regions span residues serine 176 to alanine 210 and aspartate 223 to lysine 245.

Belongs to the alphaherpesvirinae glycoprotein E family. As to quaternary structure, interacts with gI. In terms of processing, phosphorylated on serines within the acidic cluster. Phosphorylation determines whether endocytosed viral gE traffics to the trans-Golgi network or recycles to the cell membrane.

The protein resides in the virion membrane. The protein localises to the host cell membrane. Its subcellular location is the host cell junction. It is found in the host Golgi apparatus membrane. It localises to the host endosome membrane. Functionally, in epithelial cells, the heterodimer gE/gI is required for the cell-to-cell spread of the virus, by sorting nascent virions to cell junctions. Once the virus reaches the cell junctions, virus particles can spread to adjacent cells extremely rapidly through interactions with cellular receptors that accumulate at these junctions. Implicated in basolateral spread in polarized cells. In neuronal cells, gE/gI is essential for the anterograde spread of the infection throughout the host nervous system. Together with US9, the heterodimer gE/gI is involved in the sorting and transport of viral structural components toward axon tips. The chain is Envelope glycoprotein E (gE) from Equus caballus (Horse).